Reading from the N-terminus, the 106-residue chain is Large ribosomal subunit protein P1 (106 aa).

The span at 66-76 (AQPQATQAQPA) shows a compositional bias: low complexity. The disordered stretch occupies residues 66-106 (AQPQATQAQPAAEEKKEEKKEEEKKGPSEEEIASGLASLFG). The segment covering 77-93 (AEEKKEEKKEEEKKGPS) has biased composition (basic and acidic residues).

This sequence belongs to the eukaryotic ribosomal protein P1/P2 family. In terms of assembly, part of the 50S ribosomal subunit. Homodimer, it forms part of the ribosomal stalk which helps the ribosome interact with GTP-bound translation factors. Forms a heptameric uL10/P0(P1)2(P1)2(P1)2 complex, where uL10/P0 forms an elongated spine to which the P1 dimers bind in a sequential fashion.

Its function is as follows. Forms part of the ribosomal stalk, playing a central role in the interaction of the ribosome with GTP-bound translation factors. The polypeptide is Large ribosomal subunit protein P1 (Saccharolobus solfataricus (strain ATCC 35092 / DSM 1617 / JCM 11322 / P2) (Sulfolobus solfataricus)).